Here is a 280-residue protein sequence, read N- to C-terminus: Undecaprenyl-diphosphatase (280 aa).

8 helical membrane passes run 1-21 (MTILQAIVLAIVEGLTEFLPV), 41-61 (FVRAFTVMIQFGAILSVLVLY), 87-107 (FDLYWKLLIALVPAVILGFLF), 115-135 (LGSVWVVAVVLFLGGIFMLFV), 147-167 (ITYPKAFVIGLFQCLAIFLPG), 186-206 (KAAAEFSFFLAVPTMLGATLL), 226-246 (VLLVGNIVAFIVALAAIKFFI), and 260-280 (YRILVGGLLIVLMLSGVSLAV).

It belongs to the UppP family.

The protein localises to the cell inner membrane. The catalysed reaction is di-trans,octa-cis-undecaprenyl diphosphate + H2O = di-trans,octa-cis-undecaprenyl phosphate + phosphate + H(+). Catalyzes the dephosphorylation of undecaprenyl diphosphate (UPP). Confers resistance to bacitracin. The polypeptide is Undecaprenyl-diphosphatase (Porphyromonas gingivalis (strain ATCC BAA-308 / W83)).